We begin with the raw amino-acid sequence, 826 residues long: Ribosome-releasing factor 2, mitochondrial (826 aa).

A mitochondrion-targeting transit peptide spans 1 to 44 (MIVRNLLGKNRLCCLQPKLLLSTLSQRPQLQLSLQLLCRATRLY). In terms of domain architecture, tr-type G spans 53–340 (PKTRNIGIIA…GITNYLPSPL (288 aa)). GTP is bound by residues 62–69 (AHIDAGKT), 126–130 (DTPGH), and 180–183 (NKMD).

It belongs to the TRAFAC class translation factor GTPase superfamily. Classic translation factor GTPase family. EF-G/EF-2 subfamily.

It localises to the mitochondrion. Functionally, mitochondrial GTPase that mediates the disassembly of ribosomes from messenger RNA at the termination of mitochondrial protein biosynthesis. Not involved in the GTP-dependent ribosomal translocation step during translation elongation. The polypeptide is Ribosome-releasing factor 2, mitochondrial (Lodderomyces elongisporus (strain ATCC 11503 / CBS 2605 / JCM 1781 / NBRC 1676 / NRRL YB-4239) (Yeast)).